Here is a 385-residue protein sequence, read N- to C-terminus: Single-stranded DNA-binding protein 4 (385 aa).

Met-1 is modified (N-acetylmethionine). The LisH domain occupies 17-49; it reads AREKLALYVYEYLLHIGAQKSAQTFLSEIRWEK. Disordered regions lie at residues 122–287 and 331–363; these read FQGP…NSSE and GSGD…GEMA. Low complexity predominate over residues 245–263; that stretch reads SPSGNSIPYSSSSPGSYTG. Residues 267–277 are compositionally biased toward pro residues; that stretch reads GGGPPGTPIMP. At Ser-341 the chain carries Phosphoserine. Thr-355 carries the phosphothreonine modification.

Its subcellular location is the nucleus. This chain is Single-stranded DNA-binding protein 4 (SSBP4), found in Homo sapiens (Human).